The sequence spans 104 residues: Co-chaperonin GroES 3 (104 aa).

The protein belongs to the GroES chaperonin family. Heptamer of 7 subunits arranged in a ring. Interacts with the chaperonin GroEL.

The protein localises to the cytoplasm. In terms of biological role, together with the chaperonin GroEL, plays an essential role in assisting protein folding. The GroEL-GroES system forms a nano-cage that allows encapsulation of the non-native substrate proteins and provides a physical environment optimized to promote and accelerate protein folding. GroES binds to the apical surface of the GroEL ring, thereby capping the opening of the GroEL channel. The sequence is that of Co-chaperonin GroES 3 from Bradyrhizobium diazoefficiens (strain JCM 10833 / BCRC 13528 / IAM 13628 / NBRC 14792 / USDA 110).